Here is a 565-residue protein sequence, read N- to C-terminus: Translation machinery-associated protein 64 (565 aa).

One can recognise a PUA domain in the interval 89-170 (LPIVLTHGFV…VAVKIIHHFN (82 aa)). The SWIB/MDM2 domain occupies 362 to 447 (TLYKPFNLAK…GEILHPLLTN (86 aa)). An SUI1 domain is found at 475-547 (IKIITEMKIG…SIIDHLNKLG (73 aa)).

This sequence belongs to the eIF2D family. As to quaternary structure, interacts with the 40S ribosomal subunit.

This Saccharomyces cerevisiae (strain ATCC 204508 / S288c) (Baker's yeast) protein is Translation machinery-associated protein 64 (TMA64).